Consider the following 367-residue polypeptide: Peptide chain release factor 2 (367 aa).

Position 250 is an N5-methylglutamine (glutamine 250).

This sequence belongs to the prokaryotic/mitochondrial release factor family. In terms of processing, methylated by PrmC. Methylation increases the termination efficiency of RF2.

The protein resides in the cytoplasm. In terms of biological role, peptide chain release factor 2 directs the termination of translation in response to the peptide chain termination codons UGA and UAA. The sequence is that of Peptide chain release factor 2 from Mycobacteroides abscessus (strain ATCC 19977 / DSM 44196 / CCUG 20993 / CIP 104536 / JCM 13569 / NCTC 13031 / TMC 1543 / L948) (Mycobacterium abscessus).